We begin with the raw amino-acid sequence, 695 residues long: Probable glucan endo-1,3-beta-glucosidase btgC (695 aa).

Disordered stretches follow at residues 1 to 53, 117 to 140, 175 to 258, and 286 to 314; these read MSGP…THHG, RRGTDGQEANIPAERGYNTTGSDN, GPAG…RSQA, and ETSYDPVPGAGLEAGEKSQWVKPKPSTGS. The Cytoplasmic portion of the chain corresponds to 1–317; it reads MSGPHRTFSF…PKPSTGSRKR (317 aa). Positions 36 to 45 are enriched in polar residues; that stretch reads PISNMSSSPG. Residues 188–198 are compositionally biased toward polar residues; the sequence is HLGTSNSSQRN. A compositionally biased stretch (acidic residues) spans 231–241; the sequence is NPEEIADDGDD. A helical; Signal-anchor for type II membrane protein membrane pass occupies residues 318–338; that stretch reads GWIIGAILAVIIIGAIVGGAV. The Extracellular portion of the chain corresponds to 339–695; it reads GGTIGHKDSG…IPDCGGKTAA (357 aa). The tract at residues 346-372 is disordered; that stretch reads DSGDSASGSSASTQSASGDTDTNGDLD. Positions 349-366 are enriched in low complexity; it reads DSASGSSASTQSASGDTD. N-linked (GlcNAc...) asparagine glycosylation is found at Asn-415, Asn-438, and Asn-466. Residue Glu-498 is the Proton donor of the active site. Glu-597 serves as the catalytic Nucleophile. A glycan (N-linked (GlcNAc...) asparagine) is linked at Asn-642.

This sequence belongs to the glycosyl hydrolase 17 family.

It is found in the cell membrane. The catalysed reaction is Hydrolysis of (1-&gt;3)-beta-D-glucosidic linkages in (1-&gt;3)-beta-D-glucans.. Functionally, glucanases play a role in cell expansion during growth, in cell-cell fusion during mating, and in spore release during sporulation. This enzyme may be involved in beta-glucan degradation. Active on laminarin and lichenan. The protein is Probable glucan endo-1,3-beta-glucosidase btgC (btgC) of Aspergillus clavatus (strain ATCC 1007 / CBS 513.65 / DSM 816 / NCTC 3887 / NRRL 1 / QM 1276 / 107).